A 104-amino-acid chain; its full sequence is N(4)-acetylcytidine amidohydrolase (104 aa).

The region spanning 6–102 (TFYTRFQQDI…ELYVIAFKKV (97 aa)) is the ASCH domain. The active-site Proton acceptor is lysine 20. The Nucleophile role is filled by threonine 23. The Proton donor role is filled by glutamate 73.

The protein belongs to the N(4)-acetylcytidine amidohydrolase family.

It carries out the reaction N(4)-acetylcytidine + H2O = cytidine + acetate + H(+). The enzyme catalyses N(4)-acetyl-2'-deoxycytidine + H2O = 2'-deoxycytidine + acetate + H(+). It catalyses the reaction N(4)-acetylcytosine + H2O = cytosine + acetate + H(+). In terms of biological role, catalyzes the hydrolysis of N(4)-acetylcytidine (ac4C). The protein is N(4)-acetylcytidine amidohydrolase of Cronobacter sakazakii (strain ATCC BAA-894) (Enterobacter sakazakii).